The following is a 106-amino-acid chain: Large ribosomal subunit protein eL42 (106 aa).

This sequence belongs to the eukaryotic ribosomal protein eL42 family.

This is Large ribosomal subunit protein eL42 (RPL44) from Wickerhamomyces ciferrii (strain ATCC 14091 / BCRC 22168 / CBS 111 / JCM 3599 / NBRC 0793 / NRRL Y-1031 F-60-10) (Yeast).